We begin with the raw amino-acid sequence, 299 residues long: GTPase Era (299 aa).

The Era-type G domain maps to 5 to 175 (RSGFVCLVGR…IDVLAAALPP (171 aa)). The tract at residues 13 to 20 (GRPNTGKS) is G1. Residue 13–20 (GRPNTGKS) participates in GTP binding. The interval 39-43 (QTTRH) is G2. Residues 60–63 (DTPG) form a G3 region. GTP contacts are provided by residues 60 to 64 (DTPGL) and 124 to 127 (TKID). Positions 124–127 (TKID) are G4. The interval 154–156 (VSA) is G5. The KH type-2 domain occupies 206–285 (VRDELPHSLA…YLDLRVKVAK (80 aa)).

The protein belongs to the TRAFAC class TrmE-Era-EngA-EngB-Septin-like GTPase superfamily. Era GTPase family. Monomer.

It is found in the cell envelope. The protein resides in the secreted. It localises to the cell wall. Exhibits GTPase activity. Binds RNA but is probably not involved in ribosome assembly in mycobacteria. The protein is GTPase Era of Mycolicibacterium paratuberculosis (strain ATCC BAA-968 / K-10) (Mycobacterium paratuberculosis).